Here is a 253-residue protein sequence, read N- to C-terminus: 5'/3'-nucleotidase SurE (253 aa).

A divalent metal cation contacts are provided by D8, D9, S39, and N92.

This sequence belongs to the SurE nucleotidase family. A divalent metal cation serves as cofactor.

The protein resides in the cytoplasm. It catalyses the reaction a ribonucleoside 5'-phosphate + H2O = a ribonucleoside + phosphate. The catalysed reaction is a ribonucleoside 3'-phosphate + H2O = a ribonucleoside + phosphate. The enzyme catalyses [phosphate](n) + H2O = [phosphate](n-1) + phosphate + H(+). Nucleotidase with a broad substrate specificity as it can dephosphorylate various ribo- and deoxyribonucleoside 5'-monophosphates and ribonucleoside 3'-monophosphates with highest affinity to 3'-AMP. Also hydrolyzes polyphosphate (exopolyphosphatase activity) with the preference for short-chain-length substrates (P20-25). Might be involved in the regulation of dNTP and NTP pools, and in the turnover of 3'-mononucleotides produced by numerous intracellular RNases (T1, T2, and F) during the degradation of various RNAs. This is 5'/3'-nucleotidase SurE from Cronobacter sakazakii (strain ATCC BAA-894) (Enterobacter sakazakii).